A 274-amino-acid polypeptide reads, in one-letter code: ATP synthase subunit delta (274 aa).

This sequence belongs to the ATPase delta chain family. F-type ATPases have 2 components, F(1) - the catalytic core - and F(0) - the membrane proton channel. F(1) has five subunits: alpha(3), beta(3), gamma(1), delta(1), epsilon(1). F(0) has three main subunits: a(1), b(2) and c(10-14). The alpha and beta chains form an alternating ring which encloses part of the gamma chain. F(1) is attached to F(0) by a central stalk formed by the gamma and epsilon chains, while a peripheral stalk is formed by the delta and b chains.

Its subcellular location is the cell membrane. In terms of biological role, f(1)F(0) ATP synthase produces ATP from ADP in the presence of a proton or sodium gradient. F-type ATPases consist of two structural domains, F(1) containing the extramembraneous catalytic core and F(0) containing the membrane proton channel, linked together by a central stalk and a peripheral stalk. During catalysis, ATP synthesis in the catalytic domain of F(1) is coupled via a rotary mechanism of the central stalk subunits to proton translocation. This protein is part of the stalk that links CF(0) to CF(1). It either transmits conformational changes from CF(0) to CF(1) or is implicated in proton conduction. The polypeptide is ATP synthase subunit delta (Corynebacterium efficiens (strain DSM 44549 / YS-314 / AJ 12310 / JCM 11189 / NBRC 100395)).